The chain runs to 862 residues: ATP-dependent helicase Lhr-Core (862 aa).

ATP contacts are provided by Q37, K60, T61, D178, E179, V360, R377, and H380. One can recognise a Helicase ATP-binding domain in the interval 41-233 (IMDIHRGRNV…FLVGYSYGSE (193 aa)). The DEAH box motif lies at 178–181 (DEIH). The Helicase C-terminal domain occupies 269 to 424 (ALYDILHDLI…SIKVPENCLD (156 aa)). Residues 425–513 (VLAQHIYGMA…LYSTNIGTIP (89 aa)) form a WH domain region. Residues 514–862 (DRSAAVVKCG…HQAIIDEIKR (349 aa)) form a domain 4 region.

This sequence belongs to the Lhr helicase family. Lhr-Core subfamily. Monomer.

It carries out the reaction Couples ATP hydrolysis with the unwinding of duplex DNA by translocating in the 3'-5' direction.. It catalyses the reaction ATP + H2O = ADP + phosphate + H(+). Functionally, DNA helicase that translocates in a 3'-5' direction on single-stranded (ss)DNA, probably involved in DNA repair. Most active on three- or four-stranded forked DNA; flayed structures and Holliday junction (HJ) substrates are unwound slightly less well. Also unwinds 3'-tailed duplexes; both RNA:DNA hybrids and double-stranded (ds)DNA with a 3'-single strand (ss)DNA loading strand are unwound. Substrates where the helicase loads on a 3'-ssRNA tail (DNA:RNA and RNA:RNA) were not tested. Blunt-ended dsDNA is not a substrate. Probably involved in replication-coupled DNA repair; remodeling of fork DNA after binding by Lhr generates ssDNA for ATP-dependent DNA translocation. This chain is ATP-dependent helicase Lhr-Core, found in Methanothermobacter thermautotrophicus (strain ATCC 29096 / DSM 1053 / JCM 10044 / NBRC 100330 / Delta H) (Methanobacterium thermoautotrophicum).